The sequence spans 291 residues: Ribosomal RNA small subunit methyltransferase H (291 aa).

Residues Gly31 to Tyr33, Asp49, Phe76, Asp97, and Gln104 each bind S-adenosyl-L-methionine.

It belongs to the methyltransferase superfamily. RsmH family.

The protein localises to the cytoplasm. The catalysed reaction is cytidine(1402) in 16S rRNA + S-adenosyl-L-methionine = N(4)-methylcytidine(1402) in 16S rRNA + S-adenosyl-L-homocysteine + H(+). Its function is as follows. Specifically methylates the N4 position of cytidine in position 1402 (C1402) of 16S rRNA. This is Ribosomal RNA small subunit methyltransferase H from Anaplasma marginale (strain Florida).